The chain runs to 251 residues: Ubiquinone/menaquinone biosynthesis C-methyltransferase UbiE (251 aa).

S-adenosyl-L-methionine contacts are provided by residues threonine 74, aspartate 95, and 123-124 (NA).

This sequence belongs to the class I-like SAM-binding methyltransferase superfamily. MenG/UbiE family.

The catalysed reaction is a 2-demethylmenaquinol + S-adenosyl-L-methionine = a menaquinol + S-adenosyl-L-homocysteine + H(+). It carries out the reaction a 2-methoxy-6-(all-trans-polyprenyl)benzene-1,4-diol + S-adenosyl-L-methionine = a 5-methoxy-2-methyl-3-(all-trans-polyprenyl)benzene-1,4-diol + S-adenosyl-L-homocysteine + H(+). It functions in the pathway quinol/quinone metabolism; menaquinone biosynthesis; menaquinol from 1,4-dihydroxy-2-naphthoate: step 2/2. Its pathway is cofactor biosynthesis; ubiquinone biosynthesis. Functionally, methyltransferase required for the conversion of demethylmenaquinol (DMKH2) to menaquinol (MKH2) and the conversion of 2-polyprenyl-6-methoxy-1,4-benzoquinol (DDMQH2) to 2-polyprenyl-3-methyl-6-methoxy-1,4-benzoquinol (DMQH2). The sequence is that of Ubiquinone/menaquinone biosynthesis C-methyltransferase UbiE from Shewanella piezotolerans (strain WP3 / JCM 13877).